A 409-amino-acid chain; its full sequence is Chaetoglobosin A biosynthesis cluster protein C (409 aa).

An HTH CENPB-type domain is found at 51-120; sequence DLPANSRKLT…VKRQPQLRTR (70 aa). The H-T-H motif DNA-binding region spans 84-113; sequence RGVEDMANHLLRERDAPPVGKLWAHNFVKR. Disordered stretches follow at residues 243–269 and 320–350; these read PTHP…ETRS and ANEP…QDPL. Over residues 255-269 the composition is skewed to polar residues; sequence PWASKTPYNAQETRS.

It localises to the nucleus. Part of the gene cluster that mediates the biosynthesis of chaetoglobosin A which has a unique inhibitory activity against actin polymerization in mammalian cells. Chaetoglobosin A and its intermediates are involved in the morphological differentiation of C.globosum. The first step of the pathway is the synthesis of prochaetoglobosin I via condensation of one acetyl-CoA, 8 malonyl-CoA, and a L-tryptophan molecule by the PKS-NRPS hybrid synthetase cheA, followed by reduction of backbone double bond to install desired geometry by the enoyl reductase cheB. Further multiple oxidation steps performed by the cytochrome P450 monooxygenases cheE and cheG, as well as by the FAD-linked oxidoreductase cheF, lead to the formation of chaetoglobosin A. Depending on the order of action of these reductases, distinct intermediates can be identified. Within the pathway, the cytochrome P450 monooxygenase cheE catalyzes a stereospecific epoxidation on prochaetoglobosin I, cytoglobosin D, and chaetoglobosin J intermediates. The FAD-linked oxidoreductase cheF performs dehydrogenation of the C-20 hydroxyl groups in the 20-dihyrochaetoglobosin A and cytoglobosin D intermediates. Finally, the cytochrome P450 monooxygenase cheG can catalyze the stereospecific dihydroxylation of prochaetoglobosin I and prochaetoglobosin IV at C-19 and C-20, respectively. The Diels-Alderase cheD may play a role in the post-PKS-NRPS biosynthetic steps catalyzing Diels-Alder cyclization. The protein is Chaetoglobosin A biosynthesis cluster protein C of Chaetomium globosum (strain ATCC 6205 / CBS 148.51 / DSM 1962 / NBRC 6347 / NRRL 1970) (Soil fungus).